We begin with the raw amino-acid sequence, 592 residues long: MAAQGRIVWVSGPAVRADGMSEAKMYETVTVGDSKLVGEVIRLTGDVAFIQVYESTSGLKPGEPVIGTGNPLSVLLGPGIIGQLYDGIQRPLRALSEASGSFIGRGITTTPVDMAKKYHFVPSVSNGDEVAAGNVIGVVQETDLIEHSIMVPPDHKGGKISNLVSEGDYDLETVLATTEGEGETVELKMYHRWPVRKPRPYKNRYDPTVPLLTGQRVIDTFFPIAKGGTGSIPGAFGTGKTVTLHQIAKWADSQVVVYIGCGERGNEMTEVLVEFPHLKDPRSGKPLMDRTVLVANTSNMPVAAREASIYTGVTIAEYYRDMGKDVVLVADSTSRWAEALREMSGRLEEMPAEEGYPSYLASRLAEFYERAGRVRAAGSPDRDGSVTLIGAVSPSGGDFTEPVTTHTMRFIKTFWALDAKLAYSRHYPSINWMNSYSGYLADIAKWWGENINEDWLSLRSEVYGVLQREDTLKEIVRLLGPEALPDEEKLILEVARMVKIGLLQQNSFDDVDTYCSPEKQYKLMKLLVDFYKKGQQAIKEGTPLADIRAMKSITTLLKARMDVKDDEMPKLDQLDADMQEEFKSITGVKVSN.

234 to 241 (GAFGTGKT) contributes to the ATP binding site.

The protein belongs to the ATPase alpha/beta chains family. Has multiple subunits with at least A(3), B(3), C, D, E, F, H, I and proteolipid K(x).

It is found in the cell membrane. It carries out the reaction ATP + H2O + 4 H(+)(in) = ADP + phosphate + 5 H(+)(out). Its function is as follows. Component of the A-type ATP synthase that produces ATP from ADP in the presence of a proton gradient across the membrane. The A chain is the catalytic subunit. The polypeptide is A-type ATP synthase subunit A (Nitrosopumilus maritimus (strain SCM1)).